The chain runs to 156 residues: Egg-lysin (156 aa).

The signal sequence occupies residues 1-18 (MKLLVLCVFAMMATLAVS).

In terms of assembly, monomer. Homodimer. Molecules associate into dimers and then rapidly dissociate again. Interacts (as a monomer) with the egg vitelline layer protein VERL (via VERL repeats); each VERL chain can bind multiple copies of lysin. Sperm.

The protein localises to the cytoplasmic vesicle. Its subcellular location is the secretory vesicle. It localises to the acrosome lumen. Its function is as follows. Creates a 3 um hole in the egg vitelline layer through which the sperm passes. Does not have enzyme activity. Species-specific interaction between the sperm protein lysin and the egg protein VERL exposes a basic surface on lysin that may dissociate the egg vitelline layer via electrostatic repulsion. Plays a role in ensuring species-specific fertilization. This chain is Egg-lysin, found in Haliotis cracherodii (Black abalone).